Consider the following 497-residue polypeptide: Galactose/methyl galactoside import ATP-binding protein MglA 1 (497 aa).

ABC transporter domains are found at residues 6-243 and 256-494; these read LEMR…VGRD and GKVR…VMSM. Residue 38 to 45 participates in ATP binding; the sequence is GENGAGKS.

It belongs to the ABC transporter superfamily. Galactose/methyl galactoside importer (TC 3.A.1.2.3) family. The complex is composed of one ATP-binding protein (MglA), two transmembrane proteins (MglC) and a solute-binding protein (MglB).

Its subcellular location is the cell inner membrane. The catalysed reaction is D-galactose(out) + ATP + H2O = D-galactose(in) + ADP + phosphate + H(+). It carries out the reaction methyl beta-D-galactoside(out) + ATP + H2O = methyl beta-D-galactoside(in) + ADP + phosphate + H(+). In terms of biological role, part of the ABC transporter complex MglABC involved in galactose/methyl galactoside import. Responsible for energy coupling to the transport system. This Photobacterium profundum (strain SS9) protein is Galactose/methyl galactoside import ATP-binding protein MglA 1.